A 160-amino-acid chain; its full sequence is uncharacterized protein (160 aa).

It is found in the mitochondrion. This is an uncharacterized protein from Arabidopsis thaliana (Mouse-ear cress).